A 176-amino-acid polypeptide reads, in one-letter code: Prepronociceptin (176 aa).

The N-terminal stretch at 1-19 (MKVLLCDLLLLSLFSSVFS) is a signal peptide. Propeptides lie at residues 20 to 95 (SCQR…MQHL) and 169 to 176 (TLHQNGNV).

Belongs to the opioid neuropeptide precursor family. Post-translationally, specific enzymatic cleavages at paired basic residues probably yield other active peptides besides nociceptin. The N-terminal domain contains 6 conserved cysteines thought to be involved in disulfide bonding and/or processing. In terms of tissue distribution, predominantly expressed in the brain and spinal cord. Also expressed and secreted by peripheral blood neutrophils following degranulation.

It is found in the secreted. In terms of biological role, ligand of the opioid receptor-like receptor OPRL1. It may act as a transmitter in the brain by modulating nociceptive and locomotor behavior. May be involved in neuronal differentiation and development. Its function is as follows. Blocks nociceptin action in pain transmission by inhibiting nociceptin-induced hyperalgesia and allodynia. Functionally, has potent analgesic activity. The chain is Prepronociceptin (PNOC) from Homo sapiens (Human).